A 1384-amino-acid polypeptide reads, in one-letter code: DNA-directed RNA polymerase subunit beta'' (1384 aa).

Cysteine 224, cysteine 297, cysteine 304, and cysteine 307 together coordinate Zn(2+).

Belongs to the RNA polymerase beta' chain family. RpoC2 subfamily. As to quaternary structure, in plastids the minimal PEP RNA polymerase catalytic core is composed of four subunits: alpha, beta, beta', and beta''. When a (nuclear-encoded) sigma factor is associated with the core the holoenzyme is formed, which can initiate transcription. The cofactor is Zn(2+).

It localises to the plastid. Its subcellular location is the chloroplast. The catalysed reaction is RNA(n) + a ribonucleoside 5'-triphosphate = RNA(n+1) + diphosphate. Its function is as follows. DNA-dependent RNA polymerase catalyzes the transcription of DNA into RNA using the four ribonucleoside triphosphates as substrates. This is DNA-directed RNA polymerase subunit beta'' from Sinapis alba (White mustard).